Here is a 138-residue protein sequence, read N- to C-terminus: Large ribosomal subunit protein uL13 (138 aa).

It belongs to the universal ribosomal protein uL13 family. Part of the 50S ribosomal subunit.

In terms of biological role, this protein is one of the early assembly proteins of the 50S ribosomal subunit, although it is not seen to bind rRNA by itself. It is important during the early stages of 50S assembly. In Picrophilus torridus (strain ATCC 700027 / DSM 9790 / JCM 10055 / NBRC 100828 / KAW 2/3), this protein is Large ribosomal subunit protein uL13.